A 134-amino-acid polypeptide reads, in one-letter code: Fluoride-specific ion channel FluC (134 aa).

4 helical membrane passes run 7–27 (LAVA…TIMA), 38–58 (GTLL…IVLV), 69–89 (LFLF…AAES), and 110–130 (VGSL…LLGH). Residues Gly77 and Thr80 each coordinate Na(+).

Belongs to the fluoride channel Fluc/FEX (TC 1.A.43) family.

The protein localises to the cell inner membrane. It catalyses the reaction fluoride(in) = fluoride(out). Its activity is regulated as follows. Na(+) is not transported, but it plays an essential structural role and its presence is essential for fluoride channel function. In terms of biological role, fluoride-specific ion channel. Important for reducing fluoride concentration in the cell, thus reducing its toxicity. This chain is Fluoride-specific ion channel FluC, found in Legionella pneumophila (strain Paris).